The following is a 154-amino-acid chain: Hexachlorocyclohexane dehydrochlorinase 1 (154 aa).

D25 is an active-site residue. H73 functions as the Proton acceptor in the catalytic mechanism.

It belongs to the HCH dehydrochlorinase family. Homotrimer.

It localises to the periplasm. It catalyses the reaction gamma-hexachlorocyclohexane = (3R,4S,5S,6R)-pentachlorocyclohexene + chloride + H(+). The catalysed reaction is (3R,4S,5S,6R)-pentachlorocyclohexene = (3R,6R)-1,3,4,6-tetrachlorocyclohexa-1,4-diene + chloride + H(+). It functions in the pathway xenobiotic degradation; hexachlorocyclohexane degradation. In terms of biological role, catalyzes the conversion of the important environmental pollutant gamma-hexachlorocyclohexane (gamma-HCH or lindane) to 1,3,4,6-tetrachloro-1,4-cyclohexadiene (1,4-TCDN) via gamma-pentachlorocyclohexene (gamma-PCCH). Proceeds by two successive 1,2-anti conformationally dependent dehydrochlorinations. Also shows activity with alpha- and delta-HCH, giving alpha- and delta-PCCH respectively, but not with the beta isomer. In Sphingobium indicum (strain DSM 16412 / CCM 7286 / MTCC 6364 / B90A), this protein is Hexachlorocyclohexane dehydrochlorinase 1.